Reading from the N-terminus, the 810-residue chain is Leucine--tRNA ligase (810 aa).

Positions 43–53 match the 'HIGH' region motif; sequence PYPSGTLHIGH. A 'KMSKS' region motif is present at residues 578–582; that stretch reads KMSKS. Lysine 581 contributes to the ATP binding site.

The protein belongs to the class-I aminoacyl-tRNA synthetase family.

It localises to the cytoplasm. It carries out the reaction tRNA(Leu) + L-leucine + ATP = L-leucyl-tRNA(Leu) + AMP + diphosphate. In Solibacter usitatus (strain Ellin6076), this protein is Leucine--tRNA ligase.